The chain runs to 481 residues: Eukaryotic translation initiation factor 3 subunit L (481 aa).

The tract at residues 1–22 is disordered; sequence MSVDARTAYPGSRPPANMQDES. One can recognise a PCI domain in the interval 262–457; it reads DAIRTFSHIL…DLDYAIEGNL (196 aa).

The protein belongs to the eIF-3 subunit L family. In terms of assembly, component of the eukaryotic translation initiation factor 3 (eIF-3) complex.

The protein resides in the cytoplasm. Component of the eukaryotic translation initiation factor 3 (eIF-3) complex, which is involved in protein synthesis of a specialized repertoire of mRNAs and, together with other initiation factors, stimulates binding of mRNA and methionyl-tRNAi to the 40S ribosome. The eIF-3 complex specifically targets and initiates translation of a subset of mRNAs involved in cell proliferation. The polypeptide is Eukaryotic translation initiation factor 3 subunit L (Coccidioides immitis (strain RS) (Valley fever fungus)).